The chain runs to 2235 residues: Bridge-like lipid transfer protein family member 2 (2235 aa).

A signal peptide spans 1–31; that stretch reads MPLFFSALLVLLLVALSALFLGRWLVVRLAT. The interval 29–108 is transmembrane domain; sequence LATKWCQRKL…LQKVSDLSAP (80 aa). Serine 563 is modified (phosphoserine). A glycan (N-linked (GlcNAc...) asparagine) is linked at asparagine 730. The tract at residues 1495–1529 is disordered; that stretch reads PQMPAKKPKRGVPTSASAPPRVNTPSFSGQPDKGS. A coiled-coil region spans residues 1813–1885; that stretch reads SILHLQEAVR…LNILIRCFKD (73 aa). Residues serine 1846, serine 2090, and serine 2094 each carry the phosphoserine modification. A disordered region spans residues 2074-2099; it reads GKGVAQGLTRSSGVRRSFRKSPEHPV.

This sequence belongs to the SABRE family. In terms of tissue distribution, expressed in pancreas, placenta and up-regulated in breast carcinoma epithelial cells, ductal in situ carcinoma (DCIS), invasive breast carcinoma (IBC) and metastatic breast carcinoma cells (MET).

It is found in the cell membrane. It localises to the endoplasmic reticulum membrane. The protein resides in the mitochondrion membrane. Tube-forming lipid transport protein which binds to phosphatidylinositols and affects phosphatidylinositol-4,5-bisphosphate (PtdIns-4,5-P2) distribution. This chain is Bridge-like lipid transfer protein family member 2, found in Homo sapiens (Human).